A 373-amino-acid polypeptide reads, in one-letter code: Putative ribosome biogenesis protein C8F11.04 (373 aa).

A disordered region spans residues 265–373; the sequence is RKVVTKETAS…VKAGKNKVKH (109 aa). Positions 292-320 are enriched in basic and acidic residues; that stretch reads KVEVAKESKDSKQQNVSDKKQVTVKEVPK. Over residues 347–359 the composition is skewed to polar residues; it reads KVSQSSLKANGTT. The segment covering 362 to 373 has biased composition (basic residues); the sequence is KKVKAGKNKVKH.

It belongs to the universal ribosomal protein uL1 family. Highly divergent. In terms of assembly, component of the 90S pre-ribosomes.

Its subcellular location is the nucleus. The protein resides in the nucleolus. Functionally, involved in rRNA-processing and ribosome biosynthesis. The sequence is that of Putative ribosome biogenesis protein C8F11.04 from Schizosaccharomyces pombe (strain 972 / ATCC 24843) (Fission yeast).